The chain runs to 168 residues: Photosystem I assembly protein Ycf3 (168 aa).

TPR repeat units lie at residues 35-68 (AFTY…EIDP), 72-105 (SYIL…NPFL), and 120-153 (GEQA…TPGN).

This sequence belongs to the Ycf3 family.

The protein resides in the plastid. Its subcellular location is the chloroplast thylakoid membrane. Essential for the assembly of the photosystem I (PSI) complex. May act as a chaperone-like factor to guide the assembly of the PSI subunits. The protein is Photosystem I assembly protein Ycf3 of Phalaenopsis aphrodite subsp. formosana (Moth orchid).